The sequence spans 21 residues: Outer membrane protein A (21 aa).

The beta stranded transmembrane segment at threonine 6–serine 16 threads the bilayer.

The protein belongs to the outer membrane OOP (TC 1.B.6) superfamily. OmpA family. As to quaternary structure, monomer and homodimer.

The protein localises to the cell outer membrane. Its function is as follows. With TolR probably plays a role in maintaining the position of the peptidoglycan cell wall in the periplasm. Acts as a porin with low permeability that allows slow penetration of small solutes; an internal gate slows down solute passage. In Actinobacillus lignieresii, this protein is Outer membrane protein A.